Reading from the N-terminus, the 436-residue chain is MQVTVEKPETGLEHKINVTLPAGDLDSKVEQRLAQMRRTVKMDGFRPGKVPMSVVKKRYGGQVRQEMMGETVQQSFYDAVAKESLNIAGYPQFQELDEKDGHIVYSATFEVFPEVELPKFSSLKVETVTSEVTDKDVEKMVTRLREQKMAWKPANGNKKAKEGDQVIIDFVGKKDGEEFEGGKAEEVPLELGSGRMIPGFEDGIIGMKKNEEKTIEVTFPEDYQSDELKGQTVTFDITVHSVQTKVLPEIDEEFVKSFGIEEGTEEALVNEIRSNMEKELKRSVENKNRTAVLDALAEKVEVELPQAMVDQEASALMERQLEQFQQQGLKAEDIGLTAEAFKPEAEKRVKIGLVLGEVIKEYKIEATDEARQAFIQDQASSYEDPQEVIEWYAKNPQAQKEIDAILVEKEITNKILSEAKTKEVSKSFEEIVSPAA.

Residues 163-248 enclose the PPIase FKBP-type domain; sequence GDQVIIDFVG…VHSVQTKVLP (86 aa).

Belongs to the FKBP-type PPIase family. Tig subfamily.

The protein localises to the cytoplasm. The catalysed reaction is [protein]-peptidylproline (omega=180) = [protein]-peptidylproline (omega=0). Involved in protein export. Acts as a chaperone by maintaining the newly synthesized protein in an open conformation. Functions as a peptidyl-prolyl cis-trans isomerase. The chain is Trigger factor from Hydrogenovibrio crunogenus (strain DSM 25203 / XCL-2) (Thiomicrospira crunogena).